Reading from the N-terminus, the 360-residue chain is Threonine synthase (360 aa).

Lys-69 is subject to N6-(pyridoxal phosphate)lysine. Residues Asn-95, 196-200 (GNAGN), and Thr-326 each bind pyridoxal 5'-phosphate.

This sequence belongs to the threonine synthase family. Homodimer. Pyridoxal 5'-phosphate serves as cofactor.

The catalysed reaction is O-phospho-L-homoserine + H2O = L-threonine + phosphate. Its pathway is amino-acid biosynthesis; L-threonine biosynthesis; L-threonine from L-aspartate: step 5/5. Catalyzes the gamma-elimination of phosphate from L-phosphohomoserine and the beta-addition of water to produce L-threonine. This is Threonine synthase (thrC) from Mycobacterium bovis (strain ATCC BAA-935 / AF2122/97).